We begin with the raw amino-acid sequence, 263 residues long: 3-methyl-2-oxobutanoate hydroxymethyltransferase (263 aa).

Residues Asp46 and Asp85 each coordinate Mg(2+). Residues 46-47, Asp85, and Lys115 each bind 3-methyl-2-oxobutanoate; that span reads DS. A Mg(2+)-binding site is contributed by Glu117. The Proton acceptor role is filled by Glu180.

Belongs to the PanB family. In terms of assembly, homodecamer; pentamer of dimers. The cofactor is Mg(2+).

It localises to the cytoplasm. The enzyme catalyses 3-methyl-2-oxobutanoate + (6R)-5,10-methylene-5,6,7,8-tetrahydrofolate + H2O = 2-dehydropantoate + (6S)-5,6,7,8-tetrahydrofolate. It participates in cofactor biosynthesis; (R)-pantothenate biosynthesis; (R)-pantoate from 3-methyl-2-oxobutanoate: step 1/2. In terms of biological role, catalyzes the reversible reaction in which hydroxymethyl group from 5,10-methylenetetrahydrofolate is transferred onto alpha-ketoisovalerate to form ketopantoate. This is 3-methyl-2-oxobutanoate hydroxymethyltransferase from Desulforapulum autotrophicum (strain ATCC 43914 / DSM 3382 / VKM B-1955 / HRM2) (Desulfobacterium autotrophicum).